The primary structure comprises 184 residues: GTP cyclohydrolase 1 (184 aa).

3 residues coordinate Zn(2+): C75, H78, and C146.

It belongs to the GTP cyclohydrolase I family. Toroid-shaped homodecamer, composed of two pentamers of five dimers.

The enzyme catalyses GTP + H2O = 7,8-dihydroneopterin 3'-triphosphate + formate + H(+). The protein operates within cofactor biosynthesis; 7,8-dihydroneopterin triphosphate biosynthesis; 7,8-dihydroneopterin triphosphate from GTP: step 1/1. The protein is GTP cyclohydrolase 1 of Streptococcus pneumoniae serotype 2 (strain D39 / NCTC 7466).